The primary structure comprises 3672 residues: Laminin-like protein epi-1 (3672 aa).

Residues 1-27 (MSPYDSSPWATKALFLIVTLLAQFTYS) form the signal peptide. Residues 28-297 (QVLTPSQITI…AIKEIMIGGR (270 aa)) enclose the Laminin N-terminal domain. N-linked (GlcNAc...) asparagine glycosylation is found at Asn-121, Asn-140, and Asn-249. Disulfide bonds link Cys-298/Cys-307, Cys-300/Cys-320, Cys-322/Cys-331, Cys-334/Cys-354, Cys-357/Cys-366, Cys-359/Cys-391, Cys-394/Cys-403, Cys-406/Cys-424, Cys-427/Cys-438, Cys-429/Cys-445, Cys-447/Cys-456, Cys-459/Cys-469, Cys-472/Cys-484, Cys-474/Cys-491, Cys-493/Cys-502, Cys-505/Cys-516, Cys-519/Cys-531, Cys-521/Cys-538, Cys-540/Cys-549, Cys-552/Cys-561, Cys-564/Cys-576, Cys-566/Cys-583, Cys-585/Cys-594, Cys-597/Cys-607, Cys-610/Cys-622, Cys-612/Cys-629, Cys-631/Cys-640, Cys-643/Cys-653, Cys-656/Cys-668, Cys-658/Cys-674, Cys-676/Cys-685, Cys-688/Cys-698, Cys-701/Cys-715, Cys-703/Cys-724, Cys-726/Cys-735, Cys-738/Cys-753, Cys-756/Cys-770, Cys-758/Cys-777, Cys-779/Cys-788, Cys-791/Cys-806, Cys-809/Cys-821, Cys-811/Cys-828, and Cys-830/Cys-839. 10 Laminin EGF-like domains span residues 298–356 (CVCN…TCEA), 357–426 (CNCF…PCKV), 427–471 (CDCD…KCKP), 472–518 (CECN…GCVE), 519–563 (CVCD…DCKF), 564–609 (CNCD…NCKA), 610–655 (CACD…DCRG), 656–700 (CECL…ICEE), 701–755 (CNCN…GCRS), and 756–808 (CDCN…GCES). An N-linked (GlcNAc...) asparagine glycan is attached at Asn-351. N-linked (GlcNAc...) asparagine glycosylation occurs at Asn-477. Asn-511 and Asn-530 each carry an N-linked (GlcNAc...) asparagine glycan. Asn-634 carries an N-linked (GlcNAc...) asparagine glycan. Asn-761 is a glycosylation site (N-linked (GlcNAc...) asparagine). In terms of domain architecture, Laminin EGF-like 11; truncated spans 809–839 (CHCDIGGALRAECDITSGQCKCRPRVTGLRC). Asn-1014 and Asn-1341 each carry an N-linked (GlcNAc...) asparagine glycan. 16 disulfide bridges follow: Cys-1415–Cys-1427, Cys-1417–Cys-1434, Cys-1436–Cys-1445, Cys-1448–Cys-1458, Cys-1461–Cys-1469, Cys-1463–Cys-1476, Cys-1478–Cys-1487, Cys-1490–Cys-1503, Cys-1506–Cys-1520, Cys-1508–Cys-1527, Cys-1529–Cys-1538, Cys-1541–Cys-1551, Cys-1554–Cys-1566, Cys-1556–Cys-1573, Cys-1575–Cys-1584, and Cys-1587–Cys-1602. 4 Laminin EGF-like domains span residues 1415-1460 (CDCV…ECIK), 1461-1505 (CQCN…GCQK), 1506-1553 (CGCH…HCYG), and 1554-1604 (CSCN…GCVN). The Laminin EGF-like 16; first part domain maps to 1605-1614 (CFCFGVTDSC). A Laminin IV type A domain is found at 1615 to 1796 (RSSMYPVTIM…SVIKASSVEQ (182 aa)). 2 N-linked (GlcNAc...) asparagine glycosylation sites follow: Asn-1705 and Asn-1756. Residues 1797–1829 (CQCPAPYTGPSCQLCASGYHRVQSGSFLGACVP) enclose the Laminin EGF-like 16; second part domain. Disulfide bonds link Cys-1830–Cys-1839, Cys-1832–Cys-1846, Cys-1849–Cys-1858, Cys-1861–Cys-1877, Cys-1880–Cys-1894, Cys-1882–Cys-1905, Cys-1907–Cys-1916, Cys-1919–Cys-1934, Cys-1937–Cys-1951, Cys-1939–Cys-1958, Cys-1961–Cys-1970, Cys-1973–Cys-1987, Cys-1990–Cys-2000, Cys-1992–Cys-2007, Cys-2009–Cys-2018, Cys-2021–Cys-2031, Cys-2037–Cys-2048, Cys-2039–Cys-2055, Cys-2057–Cys-2066, Cys-2069–Cys-2081, Cys-2084–Cys-2096, Cys-2086–Cys-2103, Cys-2105–Cys-2114, and Cys-2117–Cys-2129. 6 consecutive Laminin EGF-like domains span residues 1830-1879 (CECN…DCMA), 1880-1936 (CACP…SCSP), 1937-1989 (CQCN…NCSS), 1990-2036 (CECS…GCQG), 2037-2083 (CHCG…GCDK), and 2084-2131 (CDCE…GCRR). Asn-1868 carries an N-linked (GlcNAc...) asparagine glycan. Residue Asn-1944 is glycosylated (N-linked (GlcNAc...) asparagine). An N-linked (GlcNAc...) asparagine glycan is attached at Asn-1986. N-linked (GlcNAc...) asparagine glycosylation is present at Asn-2002. Residues Asn-2159, Asn-2207, Asn-2231, Asn-2235, Asn-2401, Asn-2421, Asn-2487, and Asn-2821 are each glycosylated (N-linked (GlcNAc...) asparagine). Laminin G-like domains are found at residues 2693–2884 (GAHF…VNGA), 2896–3066 (ELVV…RSGC), and 3072–3235 (RTVS…LNGC). A disulfide bridge connects residues Cys-3040 and Cys-3066. A glycan (N-linked (GlcNAc...) asparagine) is linked at Asn-3087. Cysteines 3209 and 3235 form a disulfide. A disordered region spans residues 3236–3294 (SLSDDENISTTTTAAPKPTDDSDVAVLPIDEEEESTTTTTTTTTEEPTEEPAEARPDGH). A glycan (N-linked (GlcNAc...) asparagine) is linked at Asn-3242. Over residues 3271–3280 (TTTTTTTTTE) the composition is skewed to low complexity. 2 consecutive Laminin G-like domains span residues 3310–3482 (GFNF…TEQC) and 3488–3669 (PGMY…RNAC). Cysteines 3460 and 3482 form a disulfide. An N-linked (GlcNAc...) asparagine glycan is attached at Asn-3541. Cys-3633 and Cys-3669 are joined by a disulfide.

In terms of assembly, laminin is a complex glycoprotein, consisting of three different polypeptide chains (alpha, beta, gamma), which are bound to each other by disulfide bonds into a cross-shaped molecule comprising one long and three short arms with globules at each end.

Its subcellular location is the secreted. The protein resides in the extracellular space. It localises to the extracellular matrix. It is found in the basement membrane. Binding to cells via a high affinity receptor, laminin is thought to mediate the attachment, migration and organization of cells into tissues during embryonic development by interacting with other extracellular matrix components. Required to assemble a stable basement membrane and for organizing receptor complexes and cytoskeletal components to the proper cell surfaces. During embryogenesis, does not require the presence of collagen type IV in order to associate with cell surfaces, prior to assembly of the prototypical basement membrane. During the formation of neuromuscular junctions at the larval stage, negatively regulates membrane protrusion from body wall muscles, probably downstream of the integrin complex formed by pat-2 and pat-3. Probably plays a distinct role from the related laminin subunit alpha lam-3. The protein is Laminin-like protein epi-1 (epi-1) of Caenorhabditis elegans.